The primary structure comprises 872 residues: Adhesive plaque matrix protein (872 aa).

The first 20 residues, 1–20 (MEGIKLNLCLLCIFSCDIFA), serve as a signal peptide directing secretion. The tract at residues 21-41 (LSNGNIHNVYGSAYSGASAGA) is nonrepetitive linker. 69 tandem repeats follow at residues 124-133 (YKAKTSYPPS), 134-143 (YKHKITYPPT), 144-153 (YKPKITYPPT), 154-163 (YKQKPSYPPS), 174-183 (YKPKITYPPT), 184-192 (YKRKPSYTP), 193-202 (YKPKATYPPT), 203-212 (YKPKITYPPT), 213-221 (YKRKPSYTP), 222-231 (YKPKTTYPPT), 232-241 (YKPKISYPSI), 242-251 (YKPKASYVSS), 252-261 (YKSKKTYPPT), 262-271 (YKPKISYPPT), 272-281 (YKPKPSYPPT), 282-291 (YKPKVTYPPT), 292-301 (YKPKPSYPPT), 302-311 (YKPKITYPPT), 312-321 (YKPKPSYPTP), 322-331 (YKQKPSYPPI), 332-341 (YKSKSSYPTS), 342-351 (YKSKKTYPPT), 352-361 (YKPKITYPPT), 362-371 (YKPKPSYPPS), 372-381 (YKPKKTYSPT), 382-391 (YKPKITYPPT), 402-411 (YKPKTTYPPT), 412-421 (YKPKISYPPT), 422-431 (YKPKASYVSS), 432-441 (YKSKKTYPPT), 442-451 (YKPKISYPPT), 452-461 (YKPKPSYPPT), 462-471 (YKPKITYPPT), 472-481 (YKPKPSYPPT), 482-491 (YKPKITYPPT), 502-511 (YKQKPSYPPI), 512-521 (YKSKSSYPTS), 522-531 (YKSKKTYPPT), 532-541 (YKPKITYPPT), 542-551 (YKPKPSYPPS), 552-561 (YKPKTTYPPT), 562-571 (YKPKIRYPPT), 572-581 (YKPKASYPPT), 582-591 (YKPKITYPPT), 602-611 (YKQKPSYPPI), 612-621 (YKSKSSYPTA), 622-631 (YKSKKTYPPT), 632-641 (YKPKITYPPT), 642-651 (YKPKPSYPPS), 652-661 (YRPKITYPPT), 662-671 (YKPKKSYPQA), 672-681 (YKSKGSYPPS), 682-691 (YQPKKTYPPS), 702-711 (YKPKISYPPT), 712-721 (YKTKPSYPAS), 722-731 (YKRKTSYPPT), 732-741 (YKPKISYPST), 742-751 (YKAKPSYPPT), 752-761 (YKPKPSYASS), 762-771 (YKPKIRYPPT), 772-781 (YKPKPSYASS), 782-791 (YKPKIRYPPT), 792-801 (YKPKPSYASS), 812-821 (YKPKPSYASS), 822-831 (YKPKITYPPT), 832-841 (YKPKISYPPT), 842-851 (YKPKITYPPT), 852-861 (YKPKISYPPA), and 862-871 (YKPKISYPSQ). The segment at 124–871 (YKAKTSYPPS…YKPKISYPSQ (748 aa)) is 69 X 10 AA tandem repeats of Y-[KRQ]-[PSTAHQR]-K-[AIPTSKGV]-[STR]-Y-[PTSVA]-[PSTQA]-[STYIPAQ]. The interval 184-192 (YKRKPSYTP) is nonapeptide 1. The tract at residues 213 to 221 (YKRKPSYTP) is nonapeptide 2. Pro residues-rich tracts occupy residues 273 to 282 (KPKPSYPPTY) and 291 to 302 (TYKPKPSYPPTY). Positions 273-781 (KPKPSYPPTY…YKPKPSYASS (509 aa)) are disordered. A compositionally biased stretch (low complexity) spans 320 to 360 (TPYKQKPSYPPIYKSKSSYPTSYKSKKTYPPTYKPKITYPP). The span at 361 to 372 (TYKPKPSYPPSY) shows a compositional bias: pro residues. Residues 377 to 390 (TYSPTYKPKITYPP) are compositionally biased toward low complexity. Residues 391–402 (TYKPKPSYPPSY) show a composition bias toward pro residues. A compositionally biased stretch (low complexity) spans 403–450 (KPKTTYPPTYKPKISYPPTYKPKASYVSSYKSKKTYPPTYKPKISYPP). Pro residues-rich tracts occupy residues 451–462 (TYKPKPSYPPTY) and 471–482 (TYKPKPSYPPTY). Residues 501–540 (PYKQKPSYPPIYKSKSSYPTSYKSKKTYPPTYKPKITYPP) show a composition bias toward low complexity. Positions 541 to 552 (TYKPKPSYPPSY) are enriched in pro residues. Composition is skewed to low complexity over residues 568-590 (YPPT…TYPP) and 600-640 (TPYK…TYPP). Residues 641-652 (TYKPKPSYPPSY) are compositionally biased toward pro residues. Low complexity-rich tracts occupy residues 677-690 (SYPP…TYPP) and 698-719 (YPPT…PSYP). The segment covering 754–763 (PKPSYASSYK) has biased composition (low complexity).

In terms of processing, hydroxylated on proline (mono- or dihydroxylation) and tyrosine residues (to L-DOPA = 3',4'-dihydroxyphenylalanine) of the tandem repeats. Produced by the byssal gland.

The protein localises to the secreted. Provides adhesiveness to the mussel's foot. Mussels produce one of the strongest water insoluble glues. The mussel's adhesive is a bundle of threads, called a byssus, formed by a fibrous collagenous core coated with adhesive proteins. This chain is Adhesive plaque matrix protein (FP1), found in Mytilus coruscus (Sea mussel).